Reading from the N-terminus, the 186-residue chain is Elongation factor P (186 aa).

Residue Lys33 is modified to N6-(3,6-diaminohexanoyl)-5-hydroxylysine.

This sequence belongs to the elongation factor P family. May be beta-lysylated on the epsilon-amino group of Lys-33 by the combined action of EpmA and EpmB, and then hydroxylated on the C5 position of the same residue by EpmC (if this protein is present). Lysylation is critical for the stimulatory effect of EF-P on peptide-bond formation. The lysylation moiety may extend toward the peptidyltransferase center and stabilize the terminal 3-CCA end of the tRNA. Hydroxylation of the C5 position on Lys-33 may allow additional potential stabilizing hydrogen-bond interactions with the P-tRNA.

It localises to the cytoplasm. It participates in protein biosynthesis; polypeptide chain elongation. In terms of biological role, involved in peptide bond synthesis. Alleviates ribosome stalling that occurs when 3 or more consecutive Pro residues or the sequence PPG is present in a protein, possibly by augmenting the peptidyl transferase activity of the ribosome. Modification of Lys-33 is required for alleviation. This Acidithiobacillus ferrooxidans (strain ATCC 23270 / DSM 14882 / CIP 104768 / NCIMB 8455) (Ferrobacillus ferrooxidans (strain ATCC 23270)) protein is Elongation factor P.